The following is a 349-amino-acid chain: Biotin synthase (349 aa).

In terms of domain architecture, Radical SAM core spans Pro70–Arg295. [4Fe-4S] cluster contacts are provided by Cys85, Cys89, and Cys92. 4 residues coordinate [2Fe-2S] cluster: Cys128, Cys161, Cys220, and Arg290.

This sequence belongs to the radical SAM superfamily. Biotin synthase family. In terms of assembly, homodimer. [4Fe-4S] cluster serves as cofactor. Requires [2Fe-2S] cluster as cofactor.

It carries out the reaction (4R,5S)-dethiobiotin + (sulfur carrier)-SH + 2 reduced [2Fe-2S]-[ferredoxin] + 2 S-adenosyl-L-methionine = (sulfur carrier)-H + biotin + 2 5'-deoxyadenosine + 2 L-methionine + 2 oxidized [2Fe-2S]-[ferredoxin]. It participates in cofactor biosynthesis; biotin biosynthesis; biotin from 7,8-diaminononanoate: step 2/2. Its function is as follows. Catalyzes the conversion of dethiobiotin (DTB) to biotin by the insertion of a sulfur atom into dethiobiotin via a radical-based mechanism. This chain is Biotin synthase, found in Mycobacterium bovis (strain ATCC BAA-935 / AF2122/97).